Here is a 1435-residue protein sequence, read N- to C-terminus: MAKKTKNNSKSSTPVNDVPTTAGKKKAKGKKGQEPEPEDDKRAKQQSNRAKVTSTASWTGKLPHTILHETCQKRKWNKVEYDMKKIGDKGFIAIAVLSFTDPKTKETLTARMNDPTYDKASGKGLVIPQETPIEARHMASTIALYRIAYNTNLHMMLPPNHRKTWYALDDFRKDNLKTDEKRINKLFDLDPFKTMVEDRKLKAQREKEQVAQNNQAQKEQVARTILSSHGGISSSGKDRQERKVASHKNSHNPSLVRFPKKVWENSIFVDLDESSRQLIETSLKEKIDWQAKKISHKNETIAENREDLKAKLLTLQFRPKHVEEAMLYKDPLSFLLFNLPEDDLPPFFHKKKGDTKNKVEITNLPLSTRMIVERLTEIGVSSDEALLALQQNDMNENEAAGFLTREILPTLNSNTNEPVSETESIECWNQELESLESIYEGCVMDAKEDSHYTLNLIEKLKIKLKVYRTKNYPASLPGIVVSTFDKNYKLPDYIKKQILTRLLHYLQEGNLIGDMLVYHIYEWLKENISKIIDNPGPLIPDSDSKGAINKRNISNGKRSINNSSSRKFTKTTISEDTLSVLREEYTKRIKSSEYKSMQLVREQLPAWKKQKVIIDIINKNEVVLITGETGSGKSTQVVQFILDFLQKEKGDFGKTKIVCTQPRRISAIGLAERVSDERCVTCGEEVGYVIRGVNKTKASTRIKFMTTGVLVRLLQNARTMLENTIVVIDEVHERSIDTDLIVTLMKNLLHRVRGMKIVLMSATVNVDLFKKFFPGLATCHIEGRTFPITDYFLEDILSDLDFKIKREKALSYDDDSVDERNNDDQYLKPRADSKFFTSGQINYDLLCQVVEYVHKRLKAANDNGSIIVFLPGVGEINKCCNLLANKSNEADFMVLPLHSALTPEDQKRVFKKYHGKRKVVVSTNIAETSITIDDCVATIDTGRAKSMFYNPKDNTTKLIESFISKAEVKQRRGRAGRVREGLSYKLFSKNLYENDMISMPIPEIKRIPLESLYLSVKAMGIKDVKAFLSTALDAPPLPALQKAERILTTIGLVDESDKSLTQLGQFISLMPVMDSKHGKLLIYGILFGCTDISVLLVSILGIGVLPFIGGFENREKIKKLLCKYESRGDLFAVLEIVRDYFKIKDSSIKRKYLRDNLLSYNKINEIKSSTAQYYSILKDVGFLPMDYKVGSISDLNRNERNFDILRAILTGAFYPHIARVQLPDVKYLSTSSGAVEKDPEAKMIKYWIRSEEYQDKLEEYKTKISQETQKVDLEDLPLPATRAFIHPSSVLFSTNSVNLEDAKLLSEVDGPISRQSKIPTVVKYPFVLFTTSQVTNKLYLRDLTPTTTLSLLLFGGAISYDIGGTIHSPGIVVDNWLPIRTWCKNGVLIKELRTQLDEAIRKKLESPDYAKKSQIDNSGADKTLKIVEKIIASEQ.

Disordered regions lie at residues 1–57 and 226–251; these read MAKK…STAS and LSSH…KNSH. S9 is modified (phosphoserine). Residues 31–43 show a composition bias toward basic and acidic residues; it reads KGQEPEPEDDKRA. The segment covering 45–57 has biased composition (polar residues); it reads QQSNRAKVTSTAS. Residues 365-406 form the UBA domain; that stretch reads PLSTRMIVERLTEIGVSSDEALLALQQNDMNENEAAGFLTRE. In terms of domain architecture, RWD spans 430-531; that stretch reads QELESLESIY…EWLKENISKI (102 aa). The tract at residues 543–566 is disordered; the sequence is DSKGAINKRNISNGKRSINNSSSR. The span at 551 to 566 shows a compositional bias: polar residues; that stretch reads RNISNGKRSINNSSSR. The Helicase ATP-binding domain maps to 614-782; that stretch reads IDIINKNEVV…FPGLATCHIE (169 aa). ATP is bound at residue 627 to 634; it reads GETGSGKS. The DEAH box signature appears at 729–732; sequence DEVH. S816 bears the Phosphoserine mark. In terms of domain architecture, Helicase C-terminal spans 845-1020; sequence LLCQVVEYVH…SLYLSVKAMG (176 aa).

This sequence belongs to the DEAD box helicase family. DEAH subfamily.

It localises to the cytoplasm. It catalyses the reaction ATP + H2O = ADP + phosphate + H(+). Its function is as follows. Probable ATP-binding RNA helicase. The polypeptide is Putative ATP-dependent RNA helicase YLR419W (Saccharomyces cerevisiae (strain ATCC 204508 / S288c) (Baker's yeast)).